Consider the following 963-residue polypeptide: Protocadherin alpha-C1 (963 aa).

Residues 1–18 (MVGCGVAVLCLWVSCGAA) form the signal peptide. Cadherin domains lie at 19-124 (AGQL…SPLF), 125-233 (PAGD…APVF), 234-340 (ERSV…APEL), 349-445 (VPED…TPNF), and 446-555 (PQPQ…YPVI). The Extracellular segment spans residues 19–683 (AGQLEYSVPE…GGQLSAQNLY (665 aa)). Asparagine 38 carries N-linked (GlcNAc...) asparagine glycosylation. N-linked (GlcNAc...) asparagine glycosylation is found at asparagine 248 and asparagine 274. A glycan (N-linked (GlcNAc...) asparagine) is linked at asparagine 562. A Cadherin 6 domain is found at 570–667 (VPRSARTGHL…NSVPQLLPDF (98 aa)). A helical transmembrane segment spans residues 684–704 (LVIALACISFLFLGCLLFFVC). Residues 705–963 (TKLHQSPGCC…GNSTTDNSDQ (259 aa)) lie on the Cytoplasmic side of the membrane. PXXP repeat units lie at residues 812 to 815 (PRQP), 845 to 848 (PGGP), 886 to 889 (PGNP), and 904 to 907 (PGSP). A 4 X 4 AA repeats of P-X-X-P region spans residues 812–907 (PRQPNPDWRY…PDKFIIPGSP (96 aa)). A disordered region spans residues 844–963 (GPGGPDQQWP…GNSTTDNSDQ (120 aa)). The segment covering 922–936 (DKSDFITFGKKEETK) has biased composition (basic and acidic residues).

The protein resides in the cell membrane. In terms of biological role, potential calcium-dependent cell-adhesion protein. May be involved in the establishment and maintenance of specific neuronal connections in the brain. The protein is Protocadherin alpha-C1 (PCDHAC1) of Homo sapiens (Human).